Here is a 96-residue protein sequence, read N- to C-terminus: Myosuppressin (96 aa).

Residues 1-24 (MALGNGYYCAVVCVVLACASVVLC) form the signal peptide. The propeptide occupies 25-80 (APAQLCAGAADDDPRAARFCQALNTFLELYAEAAGEQVPEYQALVRDYPQLLDTGM). Gln83 bears the Pyrrolidone carboxylic acid; partial mark. Phe92 is subject to Phenylalanine amide. Arg96 is a propeptide.

This sequence belongs to the myosuppressin family. Expressed in corpora cardiaca (CC), corpora allata (CA), antennal lobe (AL) and gnathal ganglion (GNG) (at protein level). In its non-pyroglutamate form, expression in GNG detected in all animals, in AL, CC and in CA in most animals (at protein level). In its pyroglutamate form, expression in CC, CA and GNG detected in all animals, in AL in some animals (at protein level).

It is found in the secreted. Functionally, myoinhibiting neuropeptide. The sequence is that of Myosuppressin from Agrotis ipsilon (Black cutworm moth).